The primary structure comprises 228 residues: Translin (228 aa).

Positions 86–90 (RFHEH) are DNA/RNA binding. The segment at 177-198 (LDSGFRLLNLKNDSLRKRYDGL) is leucine-zipper. At Lys187 the chain carries N6-acetyllysine. Ser190 carries the post-translational modification Phosphoserine. Lys199 bears the N6-acetyllysine mark.

Belongs to the translin family. In terms of assembly, ring-shaped heterooctamer of six TSN and two TSNAX subunits, DNA/RNA binding occurs inside the ring.

Its subcellular location is the cytoplasm. It localises to the nucleus. DNA-binding protein that specifically recognizes consensus sequences at the breakpoint junctions in chromosomal translocations, mostly involving immunoglobulin (Ig)/T-cell receptor gene segments. Seems to recognize single-stranded DNA ends generated by staggered breaks occurring at recombination hot spots. Its function is as follows. Exhibits both single-stranded and double-stranded endoribonuclease activity. May act as an activator of RNA-induced silencing complex (RISC) by facilitating endonucleolytic cleavage of the siRNA passenger strand. The polypeptide is Translin (TSN) (Cricetulus griseus (Chinese hamster)).